The sequence spans 108 residues: Small ribosomal subunit protein uS10 (108 aa).

Belongs to the universal ribosomal protein uS10 family. As to quaternary structure, part of the 30S ribosomal subunit.

Functionally, involved in the binding of tRNA to the ribosomes. This chain is Small ribosomal subunit protein uS10, found in Mycoplasma pneumoniae (strain ATCC 29342 / M129 / Subtype 1) (Mycoplasmoides pneumoniae).